The chain runs to 100 residues: Integration host factor subunit alpha (100 aa).

Residues 53–72 (FQLRDKPQRPGRNPKTGEEV) are disordered.

This sequence belongs to the bacterial histone-like protein family. In terms of assembly, heterodimer of an alpha and a beta chain.

This protein is one of the two subunits of integration host factor, a specific DNA-binding protein that functions in genetic recombination as well as in transcriptional and translational control. The sequence is that of Integration host factor subunit alpha from Neisseria gonorrhoeae (strain ATCC 700825 / FA 1090).